We begin with the raw amino-acid sequence, 299 residues long: Pyridoxal 5'-phosphate synthase subunit PdxS (299 aa).

Asp24 is a D-ribose 5-phosphate binding site. Lys81 functions as the Schiff-base intermediate with D-ribose 5-phosphate in the catalytic mechanism. Gly153 contributes to the D-ribose 5-phosphate binding site. D-glyceraldehyde 3-phosphate is bound at residue Arg165. Residues Gly219 and 240-241 (GS) each bind D-ribose 5-phosphate.

The protein belongs to the PdxS/SNZ family. As to quaternary structure, in the presence of PdxT, forms a dodecamer of heterodimers.

It catalyses the reaction aldehydo-D-ribose 5-phosphate + D-glyceraldehyde 3-phosphate + L-glutamine = pyridoxal 5'-phosphate + L-glutamate + phosphate + 3 H2O + H(+). It functions in the pathway cofactor biosynthesis; pyridoxal 5'-phosphate biosynthesis. In terms of biological role, catalyzes the formation of pyridoxal 5'-phosphate from ribose 5-phosphate (RBP), glyceraldehyde 3-phosphate (G3P) and ammonia. The ammonia is provided by the PdxT subunit. Can also use ribulose 5-phosphate and dihydroxyacetone phosphate as substrates, resulting from enzyme-catalyzed isomerization of RBP and G3P, respectively. The protein is Pyridoxal 5'-phosphate synthase subunit PdxS of Methanococcus vannielii (strain ATCC 35089 / DSM 1224 / JCM 13029 / OCM 148 / SB).